Consider the following 406-residue polypeptide: Tyrosine-specific transport system 2 (406 aa).

Transmembrane regions (helical) follow at residues Phe7–Leu27, Leu38–Val58, Ile83–Gly103, Ala119–Val139, Val150–Val170, Ala183–Ala203, Ala219–His239, Val279–Gly299, Phe314–Gly334, Phe335–Ile355, and Asn376–Ile396.

The protein belongs to the amino acid/polyamine transporter 2 family. Mtr/TnaB/TyrP permease subfamily.

The protein localises to the cell inner membrane. It catalyses the reaction L-tyrosine(in) + H(+)(in) = L-tyrosine(out) + H(+)(out). Transports tyrosine across the cytoplasmic membrane. The transport system is energized by the proton motive force. The polypeptide is Tyrosine-specific transport system 2 (tyrP-B) (Haemophilus influenzae (strain ATCC 51907 / DSM 11121 / KW20 / Rd)).